The sequence spans 196 residues: tRNA (pseudouridine(54)-N(1))-methyltransferase (196 aa).

Leucine 126 contributes to the S-adenosyl-L-methionine binding site.

It belongs to the methyltransferase superfamily. TrmY family. As to quaternary structure, homodimer.

It is found in the cytoplasm. It carries out the reaction pseudouridine(54) in tRNA + S-adenosyl-L-methionine = N(1)-methylpseudouridine(54) in tRNA + S-adenosyl-L-homocysteine + H(+). In terms of biological role, specifically catalyzes the N1-methylation of pseudouridine at position 54 (Psi54) in tRNAs. The chain is tRNA (pseudouridine(54)-N(1))-methyltransferase from Halobacterium salinarum (strain ATCC 700922 / JCM 11081 / NRC-1) (Halobacterium halobium).